Here is a 452-residue protein sequence, read N- to C-terminus: UDP-glycosyltransferase 76E4 (452 aa).

UDP-alpha-D-glucose-binding positions include Thr-274, 333–335 (APQ), 350–358 (HCGWNSTLE), and 372–375 (QGEQ).

Belongs to the UDP-glycosyltransferase family.

This is UDP-glycosyltransferase 76E4 (UGT76E4) from Arabidopsis thaliana (Mouse-ear cress).